Reading from the N-terminus, the 348-residue chain is Zinc finger protein 843 (348 aa).

The C2H2-type 1 zinc-finger motif lies at 33–55 (CKCKACGRGFTQSASLLQHWRVH). The C2H2-type 2; degenerate zinc finger occupies 145 to 167 (FCCCSCGDSVNEKTSLSQRVLPH). Polar residues predominate over residues 184 to 195 (APSSVAPDSTSG). Disordered stretches follow at residues 184 to 203 (APSS…GSPG) and 256 to 329 (ATQP…WRGA).

This Homo sapiens (Human) protein is Zinc finger protein 843 (ZNF843).